We begin with the raw amino-acid sequence, 290 residues long: Acetylglutamate kinase (290 aa).

Residues G65–G66, R87, and N186 each bind substrate.

It belongs to the acetylglutamate kinase family. ArgB subfamily.

It is found in the cytoplasm. It carries out the reaction N-acetyl-L-glutamate + ATP = N-acetyl-L-glutamyl 5-phosphate + ADP. It functions in the pathway amino-acid biosynthesis; L-arginine biosynthesis; N(2)-acetyl-L-ornithine from L-glutamate: step 2/4. Its function is as follows. Catalyzes the ATP-dependent phosphorylation of N-acetyl-L-glutamate. The chain is Acetylglutamate kinase from Mycobacterium sp. (strain JLS).